Reading from the N-terminus, the 267-residue chain is Tryptophan synthase alpha chain (267 aa).

Catalysis depends on proton acceptor residues Glu-49 and Asp-60.

This sequence belongs to the TrpA family. As to quaternary structure, tetramer of two alpha and two beta chains.

It catalyses the reaction (1S,2R)-1-C-(indol-3-yl)glycerol 3-phosphate + L-serine = D-glyceraldehyde 3-phosphate + L-tryptophan + H2O. The protein operates within amino-acid biosynthesis; L-tryptophan biosynthesis; L-tryptophan from chorismate: step 5/5. Functionally, the alpha subunit is responsible for the aldol cleavage of indoleglycerol phosphate to indole and glyceraldehyde 3-phosphate. The chain is Tryptophan synthase alpha chain from Geobacter sp. (strain M21).